The following is a 796-amino-acid chain: N-terminal acetyltransferase B complex subunit MDM20 (796 aa).

Residue S2 is modified to N-acetylserine.

This sequence belongs to the MDM20/NAA25 family. Component of the N-terminal acetyltransferase B (NatB) complex, which is composed of NAT3 and MDM20.

The protein resides in the cytoplasm. Its function is as follows. Non-catalytic subunit of the NatB N-terminal acetyltransferase, which catalyzes acetylation of the amino-terminal methionine residues of all proteins beginning with Met-Asp or Met-Glu and of some proteins beginning with Met-Asn or Met-Met. NatB acetylates TPM1 protein and regulates tropomyocin-actin interactions. MDM20 is required for mitochondrial inheritance during budding and together with TPM1, is essential for the integrity and assembly of actin cables. Genetically interacts with CIN8. The sequence is that of N-terminal acetyltransferase B complex subunit MDM20 (MDM20) from Saccharomyces cerevisiae (strain ATCC 204508 / S288c) (Baker's yeast).